Here is a 2346-residue protein sequence, read N- to C-terminus: Myomegalin (2346 aa).

Coiled coils occupy residues 41–132, 162–205, 238–318, and 350–684; these read REDI…LVEA, DQYT…LLEE, DSHL…REML, and CSQL…RQYL. E252 carries the phosphoserine modification. Residues 698–732 form a disordered region; that stretch reads NQQAEVTPTGRLGKQTDQGSMQIPSRDDSTSLTAK. A Phosphothreonine modification is found at T704. Positions 722–732 are enriched in basic and acidic residues; it reads SRDDSTSLTAK. Coiled-coil stretches lie at residues 743-936, 1002-1043, 1096-1124, 1212-1240, 1346-1385, and 1431-1455; these read GDLD…TLAA, LQEE…SSVS, SSLQ…EQLV, STQH…SEAT, GKSE…LSVT, and GLQA…LPKN. A disordered region spans residues 1193–1214; it reads DNQSQPRDPGPQSAFSLPGSTQ. Residues 1205 to 1214 show a composition bias toward polar residues; it reads SAFSLPGSTQ. The Olduvai domain maps to 1551–1642; it reads KDHKSEKDQA…EEKKASPSHS (92 aa). Residues 1591–1600 show a composition bias toward low complexity; sequence SLTPSSSHAL. Disordered regions lie at residues 1591 to 1614 and 1633 to 1690; these read SLTP…SFLS and EEKK…EANQ. Over residues 1652–1690 the composition is skewed to polar residues; it reads AVLSSKPSSTSASQGAKAESNSNPISLPTPQNTPKEANQ. 2 coiled-coil regions span residues 1736–1760 and 1840–2077; these read VVSL…ASTV and GADL…QQLE. Disordered stretches follow at residues 2081-2103 and 2127-2156; these read GKAS…PGNK and VFPS…TSPV. The span at 2085-2103 shows a compositional bias: polar residues; sequence LSPSSINQNFPASTDPGNK. A coiled-coil region spans residues 2273–2312; the sequence is ESTERELLELRTKVSKQERLLQSTTEHLKNANQQKESMEQ.

In terms of assembly, interacts with PDE4D. Isoform 13 interacts with MAPRE1 and MAPRE3. Isoform 13 forms a pericentrosomal complex with AKAP9, CDK5RAP2 and EB1/MAPRE1; within this complex, may mediate MAPRE1-binding to CDK5RAP2. Interaction of isoform 13 with AKAP9 stabilizes both proteins. Isoform 13 interacts (via N-terminus) with CAMSAP2; this interaction is much stronger in the presence of AKAP9. In complex with AKAP9, Isoform 13 recruits CAMSAP2 to the Golgi apparatus. Isoform 13 interacts with unglycosylated LGALS3BP; this interaction may connect the pericentrosomal complex to the gamma-tubulin ring complex (gamma-TuRC) to promote microtubule assembly and acetylation. In terms of tissue distribution, highly expressed in adult and fetal heart, in skeletal muscle and, to a lower extent, in brain and placenta.

It localises to the golgi apparatus. It is found in the cytoplasm. The protein localises to the cytoskeleton. The protein resides in the microtubule organizing center. Its subcellular location is the centrosome. Its function is as follows. Functions as an anchor sequestering components of the cAMP-dependent pathway to Golgi and/or centrosomes. In terms of biological role, participates in microtubule dynamics, promoting microtubule assembly. Depending upon the cell context, may act at the level of the Golgi apparatus or that of the centrosome. In complex with AKAP9, recruits CAMSAP2 to the Golgi apparatus and tethers non-centrosomal minus-end microtubules to the Golgi, an important step for polarized cell movement. In complex with AKAP9, EB1/MAPRE1 and CDK5RAP2, contributes to microtubules nucleation and extension from the centrosome to the cell periphery, a crucial process for directed cell migration, mitotic spindle orientation and cell-cycle progression. This Homo sapiens (Human) protein is Myomegalin (PDE4DIP).